Consider the following 491-residue polypeptide: Acetyl-coenzyme A carboxylase carboxyl transferase subunit beta, chloroplastic (491 aa).

One can recognise a CoA carboxyltransferase N-terminal domain in the interval 224-491 (LWIQCENCYG…FFPLNPKKIK (268 aa)). Positions 228, 231, 247, and 250 each coordinate Zn(2+). A C4-type zinc finger spans residues 228-250 (CENCYGLNYKKNLKSKINICEQC).

Belongs to the AccD/PCCB family. In terms of assembly, acetyl-CoA carboxylase is a heterohexamer composed of biotin carboxyl carrier protein, biotin carboxylase and 2 subunits each of ACCase subunit alpha and ACCase plastid-coded subunit beta (accD). Zn(2+) serves as cofactor.

The protein resides in the plastid. Its subcellular location is the chloroplast stroma. It carries out the reaction N(6)-carboxybiotinyl-L-lysyl-[protein] + acetyl-CoA = N(6)-biotinyl-L-lysyl-[protein] + malonyl-CoA. It participates in lipid metabolism; malonyl-CoA biosynthesis; malonyl-CoA from acetyl-CoA: step 1/1. Functionally, component of the acetyl coenzyme A carboxylase (ACC) complex. Biotin carboxylase (BC) catalyzes the carboxylation of biotin on its carrier protein (BCCP) and then the CO(2) group is transferred by the transcarboxylase to acetyl-CoA to form malonyl-CoA. In Vitis vinifera (Grape), this protein is Acetyl-coenzyme A carboxylase carboxyl transferase subunit beta, chloroplastic.